Reading from the N-terminus, the 505-residue chain is Trans-cinnamate 4-monooxygenase (505 aa).

A helical transmembrane segment spans residues L3–V23. Residues R213 to Q218 and A306 each bind (E)-cinnamate. C447 is a binding site for heme.

It belongs to the cytochrome P450 family. Heme serves as cofactor.

The protein resides in the membrane. It catalyses the reaction (E)-cinnamate + reduced [NADPH--hemoprotein reductase] + O2 = (E)-4-coumarate + oxidized [NADPH--hemoprotein reductase] + H2O + H(+). It participates in phenylpropanoid metabolism; trans-4-coumarate biosynthesis; trans-4-coumarate from trans-cinnamate: step 1/1. Its function is as follows. Catalyzes the first oxidative step of the phenylpropanoid pathway in higher plants by transforming trans-cinnamate into p-coumarate. The compounds formed by this pathway are essential components for lignification, pollination, and defense against ultraviolet light, predators and pathogens. The polypeptide is Trans-cinnamate 4-monooxygenase (CYP73A13) (Populus tremuloides (Quaking aspen)).